The chain runs to 230 residues: Dephospho-CoA kinase (230 aa).

The DPCK domain occupies 3–206 (LVGLTGGIAS…EPLTWKERLR (204 aa)). 8–15 (GGIASGKS) provides a ligand contact to ATP.

The protein belongs to the CoaE family.

It catalyses the reaction 3'-dephospho-CoA + ATP = ADP + CoA + H(+). It functions in the pathway cofactor biosynthesis; coenzyme A biosynthesis; CoA from (R)-pantothenate: step 5/5. Its function is as follows. Catalyzes the phosphorylation of the 3'-hydroxyl group of dephosphocoenzyme A to form coenzyme A. The chain is Dephospho-CoA kinase from Oryza sativa subsp. japonica (Rice).